Consider the following 214-residue polypeptide: Pyridoxine/pyridoxamine 5'-phosphate oxidase (214 aa).

Residues Arg9–Tyr12 and Lys67 contribute to the substrate site. FMN contacts are provided by residues Arg62–Lys67, Phe77–Thr78, Lys84, and Gln106. Substrate is bound by residues Tyr124, Arg128, and Ser132. FMN is bound by residues Gln141–Ser142 and Trp186. Residue Arg192–His194 coordinates substrate. Position 196 (Arg196) interacts with FMN.

It belongs to the pyridoxamine 5'-phosphate oxidase family. As to quaternary structure, homodimer. Requires FMN as cofactor.

The enzyme catalyses pyridoxamine 5'-phosphate + O2 + H2O = pyridoxal 5'-phosphate + H2O2 + NH4(+). It catalyses the reaction pyridoxine 5'-phosphate + O2 = pyridoxal 5'-phosphate + H2O2. Its pathway is cofactor metabolism; pyridoxal 5'-phosphate salvage; pyridoxal 5'-phosphate from pyridoxamine 5'-phosphate: step 1/1. The protein operates within cofactor metabolism; pyridoxal 5'-phosphate salvage; pyridoxal 5'-phosphate from pyridoxine 5'-phosphate: step 1/1. In terms of biological role, catalyzes the oxidation of either pyridoxine 5'-phosphate (PNP) or pyridoxamine 5'-phosphate (PMP) into pyridoxal 5'-phosphate (PLP). This chain is Pyridoxine/pyridoxamine 5'-phosphate oxidase, found in Microcystis aeruginosa (strain NIES-843 / IAM M-2473).